The following is a 221-amino-acid chain: MEQKLIIRQLGIRDYQKTWHEMQEFTDNRTDKSADEIWLVQHPSVFTQGQAGKAEHLLRSTAIPVVQSDRGGQITYHGIGQQIMYVLIDIKRLKTQGRDISVRQLVSALEQSVINTLADYGIESYAKADAPGVYIDGKKICSLGLRIRRGCSFHGLALNINMDLEPFHSINPCGYAGLEMAQLADFVSPQEADCGKVSPKLVEHFVTILGYNKQQIFNIKE.

The BPL/LPL catalytic domain maps to 31–213 (DKSADEIWLV…HFVTILGYNK (183 aa)). Substrate contacts are provided by residues 70–77 (RGGQITYH), 142–144 (SLG), and 155–157 (GLA). C173 functions as the Acyl-thioester intermediate in the catalytic mechanism.

The protein belongs to the LipB family.

It localises to the cytoplasm. It catalyses the reaction octanoyl-[ACP] + L-lysyl-[protein] = N(6)-octanoyl-L-lysyl-[protein] + holo-[ACP] + H(+). It functions in the pathway protein modification; protein lipoylation via endogenous pathway; protein N(6)-(lipoyl)lysine from octanoyl-[acyl-carrier-protein]: step 1/2. Functionally, catalyzes the transfer of endogenously produced octanoic acid from octanoyl-acyl-carrier-protein onto the lipoyl domains of lipoate-dependent enzymes. Lipoyl-ACP can also act as a substrate although octanoyl-ACP is likely to be the physiological substrate. This chain is Octanoyltransferase, found in Mannheimia succiniciproducens (strain KCTC 0769BP / MBEL55E).